The sequence spans 612 residues: Dihydroxy-acid dehydratase (612 aa).

Aspartate 81 contacts Mg(2+). Cysteine 122 contributes to the [2Fe-2S] cluster binding site. The Mg(2+) site is built by aspartate 123 and lysine 124. Residue lysine 124 is modified to N6-carboxylysine. Cysteine 195 lines the [2Fe-2S] cluster pocket. Glutamate 491 is a binding site for Mg(2+). Serine 517 acts as the Proton acceptor in catalysis.

It belongs to the IlvD/Edd family. Homodimer. [2Fe-2S] cluster is required as a cofactor. Requires Mg(2+) as cofactor.

It catalyses the reaction (2R)-2,3-dihydroxy-3-methylbutanoate = 3-methyl-2-oxobutanoate + H2O. It carries out the reaction (2R,3R)-2,3-dihydroxy-3-methylpentanoate = (S)-3-methyl-2-oxopentanoate + H2O. Its pathway is amino-acid biosynthesis; L-isoleucine biosynthesis; L-isoleucine from 2-oxobutanoate: step 3/4. It functions in the pathway amino-acid biosynthesis; L-valine biosynthesis; L-valine from pyruvate: step 3/4. Functionally, functions in the biosynthesis of branched-chain amino acids. Catalyzes the dehydration of (2R,3R)-2,3-dihydroxy-3-methylpentanoate (2,3-dihydroxy-3-methylvalerate) into 2-oxo-3-methylpentanoate (2-oxo-3-methylvalerate) and of (2R)-2,3-dihydroxy-3-methylbutanoate (2,3-dihydroxyisovalerate) into 2-oxo-3-methylbutanoate (2-oxoisovalerate), the penultimate precursor to L-isoleucine and L-valine, respectively. In Sinorhizobium fredii (strain NBRC 101917 / NGR234), this protein is Dihydroxy-acid dehydratase.